Reading from the N-terminus, the 448-residue chain is Probable glycine dehydrogenase (decarboxylating) subunit 1 (448 aa).

This sequence belongs to the GcvP family. N-terminal subunit subfamily. As to quaternary structure, the glycine cleavage system is composed of four proteins: P, T, L and H. In this organism, the P 'protein' is a heterodimer of two subunits.

It catalyses the reaction N(6)-[(R)-lipoyl]-L-lysyl-[glycine-cleavage complex H protein] + glycine + H(+) = N(6)-[(R)-S(8)-aminomethyldihydrolipoyl]-L-lysyl-[glycine-cleavage complex H protein] + CO2. Functionally, the glycine cleavage system catalyzes the degradation of glycine. The P protein binds the alpha-amino group of glycine through its pyridoxal phosphate cofactor; CO(2) is released and the remaining methylamine moiety is then transferred to the lipoamide cofactor of the H protein. This Exiguobacterium sibiricum (strain DSM 17290 / CCUG 55495 / CIP 109462 / JCM 13490 / 255-15) protein is Probable glycine dehydrogenase (decarboxylating) subunit 1.